Reading from the N-terminus, the 433-residue chain is Serendipity locus protein delta (433 aa).

One can recognise a ZAD domain in the interval 1–90 (MDTCFFCGAV…TQKRLTTQLK (90 aa)). Zn(2+) contacts are provided by C4, C7, C61, and C64. The tract at residues 141–162 (DTEIKREFVDEEEEEDDDDDDE) is disordered. Residues 149-162 (VDEEEEEDDDDDDE) show a composition bias toward acidic residues. The short motif at 187–193 (PTKKRVK) is the Nuclear localization signal element. 7 consecutive C2H2-type zinc fingers follow at residues 194–217 (QECTTCGKVYNSWYQLQKHISEEH), 223–245 (HICPICGVIRRDEEYLELHMNLH), 251–273 (KQCRYCPKSFSRPVNTLRHMRMH), 279–301 (YQCEKCGLRFSQDNLLYNHRLRH), 308–330 (IICSICNVSFKSRKTFNHHTLIH), 337–359 (HYCSVCPKSFTERYTLKMHMKTH), and 405–428 (GFCLICNTNFENKKELEHHLQFDH).

Homodimer (via ZAD domain) in solution. Binds DNA as a homodimer. N-terminal regions of the protein are required, in addition to the zinc fingers, for the specificity of chromatin-binding. As to expression, predominantly localized to the sub- and supraesophagal ganglia and the ventral nerve cord in the embryo, after dorsal closure.

The protein localises to the nucleus. Functionally, transcriptional activator that controls bicoid gene expression during oogenesis. Found in transcriptionally active cells. Binds to specific sites on polytene chromosomes of third instar larvae. Binds to the consensus DNA sequence 5'-YTAGAGATGGRAA-3'. This chain is Serendipity locus protein delta (Sry-delta), found in Drosophila melanogaster (Fruit fly).